The following is a 384-amino-acid chain: 1-deoxy-D-xylulose 5-phosphate reductoisomerase (384 aa).

6 residues coordinate NADPH: Thr10, Gly11, Ser12, Ile13, Asn38, and Asn120. Lys121 is a binding site for 1-deoxy-D-xylulose 5-phosphate. Glu122 is an NADPH binding site. Asp146 contacts Mn(2+). 1-deoxy-D-xylulose 5-phosphate-binding residues include Ser147, Glu148, Ser172, and His195. Residue Glu148 participates in Mn(2+) binding. NADPH is bound at residue Gly201. 1-deoxy-D-xylulose 5-phosphate is bound by residues Ser208, Asn213, Lys214, and Glu217. Glu217 contributes to the Mn(2+) binding site.

Belongs to the DXR family. Mg(2+) serves as cofactor. The cofactor is Mn(2+).

The enzyme catalyses 2-C-methyl-D-erythritol 4-phosphate + NADP(+) = 1-deoxy-D-xylulose 5-phosphate + NADPH + H(+). The protein operates within isoprenoid biosynthesis; isopentenyl diphosphate biosynthesis via DXP pathway; isopentenyl diphosphate from 1-deoxy-D-xylulose 5-phosphate: step 1/6. Functionally, catalyzes the NADPH-dependent rearrangement and reduction of 1-deoxy-D-xylulose-5-phosphate (DXP) to 2-C-methyl-D-erythritol 4-phosphate (MEP). This is 1-deoxy-D-xylulose 5-phosphate reductoisomerase from Protochlamydia amoebophila (strain UWE25).